The sequence spans 804 residues: Ion-translocating oxidoreductase complex subunit C (804 aa).

4Fe-4S ferredoxin-type domains lie at 366 to 397 (SEMGQNEAEQGCIRCSACADACPAALLPQQLY) and 407 to 436 (KARAHNIADCIECGACAYVCPSNIPLVQYY). Residues cysteine 377, cysteine 380, cysteine 383, cysteine 387, cysteine 416, cysteine 419, cysteine 422, and cysteine 426 each coordinate [4Fe-4S] cluster. Disordered stretches follow at residues 466 to 532 (RLER…EVRV) and 567 to 804 (KAAQ…MQED). 7 stretches are compositionally biased toward low complexity: residues 484–495 (SVASSDAGAIAA), 567–582 (KAAQAAEASPTEAPQQ), 592–619 (AAVAAAVARTKAKKAAQAAEASPTEAPQ), 629–660 (KAAVAAAVARAKAKKAAQAAEASATEAPQQSA), 668–693 (AAVAAAVARAKAKKAAQAAEASATEA), 706–731 (AAVAAAVARAKAKKAAQAAEASATEA), and 744–769 (AAVAAAVARAKAKKAAQAAEASATEA).

This sequence belongs to the 4Fe4S bacterial-type ferredoxin family. RnfC subfamily. As to quaternary structure, the complex is composed of six subunits: RnfA, RnfB, RnfC, RnfD, RnfE and RnfG. [4Fe-4S] cluster serves as cofactor.

The protein resides in the cell inner membrane. Functionally, part of a membrane-bound complex that couples electron transfer with translocation of ions across the membrane. In Erwinia tasmaniensis (strain DSM 17950 / CFBP 7177 / CIP 109463 / NCPPB 4357 / Et1/99), this protein is Ion-translocating oxidoreductase complex subunit C.